Reading from the N-terminus, the 319-residue chain is R-phycoerythrin gamma chain, chloroplastic (319 aa).

Residues 1-71 constitute a chloroplast transit peptide; that stretch reads MDSPAFAVTG…RPKKLASYKR (71 aa). Cysteine 96 and cysteine 135 together coordinate phycourobilin. Residue cysteine 212 participates in (2R,3E)-phycoerythrobilin binding. Residue cysteine 299 participates in phycourobilin binding.

In terms of assembly, heteromer of 4 alpha, 4 beta and one gamma chains. Contains four covalently linked bilin chromophores.

The protein resides in the plastid. Its subcellular location is the chloroplast thylakoid membrane. In Corallina officinalis (Coral seaweed), this protein is R-phycoerythrin gamma chain, chloroplastic.